A 419-amino-acid chain; its full sequence is Serine hydroxymethyltransferase (419 aa).

Residues leucine 121 and 125–127 (GHL) contribute to the (6S)-5,6,7,8-tetrahydrofolate site. Lysine 230 is modified (N6-(pyridoxal phosphate)lysine). Position 354–356 (354–356 (SPF)) interacts with (6S)-5,6,7,8-tetrahydrofolate.

Belongs to the SHMT family. As to quaternary structure, homodimer. It depends on pyridoxal 5'-phosphate as a cofactor.

Its subcellular location is the cytoplasm. The catalysed reaction is (6R)-5,10-methylene-5,6,7,8-tetrahydrofolate + glycine + H2O = (6S)-5,6,7,8-tetrahydrofolate + L-serine. It functions in the pathway one-carbon metabolism; tetrahydrofolate interconversion. Its pathway is amino-acid biosynthesis; glycine biosynthesis; glycine from L-serine: step 1/1. In terms of biological role, catalyzes the reversible interconversion of serine and glycine with tetrahydrofolate (THF) serving as the one-carbon carrier. This reaction serves as the major source of one-carbon groups required for the biosynthesis of purines, thymidylate, methionine, and other important biomolecules. Also exhibits THF-independent aldolase activity toward beta-hydroxyamino acids, producing glycine and aldehydes, via a retro-aldol mechanism. This Prochlorococcus marinus (strain SARG / CCMP1375 / SS120) protein is Serine hydroxymethyltransferase.